The chain runs to 339 residues: D-erythrose-4-phosphate dehydrogenase (339 aa).

Residues 12–13 (RI) and R81 each bind NAD(+). Substrate contacts are provided by residues 154–156 (SCT), R200, 213–214 (TK), and R236. C155 (nucleophile) is an active-site residue. Position 318 (N318) interacts with NAD(+).

The protein belongs to the glyceraldehyde-3-phosphate dehydrogenase family. Epd subfamily. In terms of assembly, homotetramer.

Its subcellular location is the cytoplasm. It catalyses the reaction D-erythrose 4-phosphate + NAD(+) + H2O = 4-phospho-D-erythronate + NADH + 2 H(+). Its pathway is cofactor biosynthesis; pyridoxine 5'-phosphate biosynthesis; pyridoxine 5'-phosphate from D-erythrose 4-phosphate: step 1/5. Catalyzes the NAD-dependent conversion of D-erythrose 4-phosphate to 4-phosphoerythronate. The sequence is that of D-erythrose-4-phosphate dehydrogenase from Escherichia coli O45:K1 (strain S88 / ExPEC).